We begin with the raw amino-acid sequence, 428 residues long: Histidine--tRNA ligase (428 aa).

This sequence belongs to the class-II aminoacyl-tRNA synthetase family. As to quaternary structure, homodimer.

The protein localises to the cytoplasm. The catalysed reaction is tRNA(His) + L-histidine + ATP = L-histidyl-tRNA(His) + AMP + diphosphate + H(+). This is Histidine--tRNA ligase from Bordetella pertussis (strain Tohama I / ATCC BAA-589 / NCTC 13251).